Reading from the N-terminus, the 432-residue chain is Putative D-alanyl-D-alanine carboxypeptidase (432 aa).

The helical; Signal-anchor transmembrane segment at 7–25 (ATVLLTFSLSAFAVEYPVL) threads the bilayer.

It belongs to the peptidase S12 family. YfeW subfamily.

It is found in the cell inner membrane. It carries out the reaction Preferential cleavage: (Ac)2-L-Lys-D-Ala-|-D-Ala. Also transpeptidation of peptidyl-alanyl moieties that are N-acyl substituents of D-alanine.. The polypeptide is Putative D-alanyl-D-alanine carboxypeptidase (Salmonella choleraesuis (strain SC-B67)).